The following is a 58-amino-acid chain: Lantibiotic macedovicin (58 aa).

Positions 1-25 are excised as a propeptide; it reads MMNATENQIFVETVSDQELEMLIGG. Residues T33 and T35 each carry the 2,3-didehydrobutyrine modification. 2 cross-links (beta-methyllanthionine (Thr-Cys)) span residues 33-38 and 35-57; these read TLTKDC and TKDCPNVISSICAGTIITACKNC. The cysteines at positions 46 and 54 are disulfide-linked.

Post-translationally, maturation of macedovicin involves the enzymatic dehydration of Thr-33 and Thr-35 into dehydrobutyrine residues, that can form a beta-methyllanthionine bond with Cys-38 and Cys-57, respectively. This is followed by membrane translocation and cleavage of the modified precursor.

It localises to the secreted. Its function is as follows. Lanthionine-containing peptide antibiotic (lantibiotic) active on Gram-positive bacteria. Macedovicin inhibits a broad spectrum of lactic acid bacteria, several food spoilage species (e.g. Clostridium spp.) and oral streptococci. The bactericidal activity of lantibiotics is based on depolarization of energized bacterial cytoplasmic membranes, initiated by the formation of aqueous transmembrane pores. The sequence is that of Lantibiotic macedovicin from Streptococcus macedonicus (strain ACA-DC 198).